A 107-amino-acid chain; its full sequence is Putative double-stranded DNA mimic protein HI_1450 (107 aa).

The protein belongs to the putative dsDNA mimic protein family. As to quaternary structure, monomer in solution. Interacts with the DNA-binding protein HU.

Functionally, may act as a double-stranded DNA (dsDNA) mimic. Probably regulates the activity of the DNA-binding protein HU. This is Putative double-stranded DNA mimic protein HI_1450 from Haemophilus influenzae (strain ATCC 51907 / DSM 11121 / KW20 / Rd).